The primary structure comprises 339 residues: Photosystem II assembly lipoprotein Ycf48 (339 aa).

Positions 1 to 23 are cleaved as a signal peptide; sequence MNRLIKFSFNLILIFVLGLGLSG. C24 carries N-palmitoyl cysteine lipidation. C24 carries S-diacylglycerol cysteine lipidation.

It belongs to the Ycf48 family. As to quaternary structure, part of early PSII assembly complexes which includes D1 (psbA) and PsbI; not found in mature PSII. Binds to the lumenal side of PSII complexes. Interacts with YidC.

The protein resides in the cellular thylakoid membrane. A factor required for optimal assembly of photosystem II (PSII), acting in the early stages of PSII assembly. Also plays a role in replacement of photodamaged D1 (psbA). Assists YidC in synthesis of chlorophyll-binding proteins. The protein is Photosystem II assembly lipoprotein Ycf48 of Prochlorococcus marinus (strain SARG / CCMP1375 / SS120).